Consider the following 321-residue polypeptide: Ribose-phosphate pyrophosphokinase C (321 aa).

Mg(2+)-binding residues include Asp132 and Asp147. The interval 214–229 is binding of phosphoribosylpyrophosphate; that stretch reads SGKVAIIIGSIADTCE.

Belongs to the ribose-phosphate pyrophosphokinase family. The cofactor is Mg(2+).

The protein localises to the cytoplasm. The catalysed reaction is D-ribose 5-phosphate + ATP = 5-phospho-alpha-D-ribose 1-diphosphate + AMP + H(+). Its pathway is metabolic intermediate biosynthesis; 5-phospho-alpha-D-ribose 1-diphosphate biosynthesis; 5-phospho-alpha-D-ribose 1-diphosphate from D-ribose 5-phosphate (route I): step 1/1. The chain is Ribose-phosphate pyrophosphokinase C (prsC) from Dictyostelium discoideum (Social amoeba).